The chain runs to 786 residues: MPPKPLFPNVFPGDGAPRKRRLALALLAVPGLVPAVSYAQLSGAAAQPQPLDSPWDLRLAPQLEDHPLKDGAKPAAFVIADHTSGTAEQDLAAKGSAELRRGDAVVKADALHYDQDTDMADAYGQVRVINGGTSFAGPEAHLKVEANQGFMTAPKYHFNVTGGSGSAERVDLLDSERSVFVNGTYTACQCATDPAWYIKGSRFDFDTGADEGTARNGVLFFQGVPIFASPWLTFPLSGERRSGLLPPTFSLNSNNGFELTLPYYFNIAPNRDLTITPRIISRRGVQTEASFRYLSPTYSGTLTANYLPDDRLAHRNRYAIYWQHQQNFGGGFGGYVYFNKVSDNTYPEDLGSTNEFINGTQTLYQQEAGLTYNNGPWSVLARYQHWQTLPPSIAPYSREPQLNVKYTKYNVGGFDFGAEADYSRFRITTADATEGDRIVFNPYIAYGVYGPGYFVVPKVQYHFASYDLNYLSSSTPNSPKRFTESIPTVSFDTGLIFDRSVRLFGQDFIQTLEPRLYYVYTPYRDQSNAPLFDTAESDFGLAEIYQPNTFVGNDRIADANRITAGLTSRFIDPRTGDERARFVIAQQYYFANQRVTLNSVQAPVQARHSDLIVGAALKLGSGFMSETAFQYNQNNNQLVKSSIGFGFSPGERRVINVGYRYTRANTTLDNQPINQFLVSAQWPLTRRLYAVGRFNYDLAANRVVDGLLGLQYDADCWALGVGAQRFANGVNSSGQQNSSTRFMMQLTLKGLSSIDNGLVAAFRAGVPGYTALPSAPPPMSRFSNYE.

An N-terminal signal peptide occupies residues 1–39; sequence MPPKPLFPNVFPGDGAPRKRRLALALLAVPGLVPAVSYA.

It belongs to the LptD family. In terms of assembly, component of the lipopolysaccharide transport and assembly complex. Interacts with LptE and LptA.

The protein localises to the cell outer membrane. Its function is as follows. Together with LptE, is involved in the assembly of lipopolysaccharide (LPS) at the surface of the outer membrane. The sequence is that of LPS-assembly protein LptD from Burkholderia ambifaria (strain ATCC BAA-244 / DSM 16087 / CCUG 44356 / LMG 19182 / AMMD) (Burkholderia cepacia (strain AMMD)).